Here is a 483-residue protein sequence, read N- to C-terminus: Membrane-bound lytic murein transglycosylase F (483 aa).

The first 18 residues, 1–18 (MKGLVIRISVALALLLWA), serve as a signal peptide directing secretion. The interval 19 to 270 (VDMVFPWQQI…RIEEKYFSHI (252 aa)) is non-LT domain. The tract at residues 272–483 (QFDYVDIKSY…IMITPQNSQD (212 aa)) is LT domain. Glu-315 is an active-site residue.

This sequence in the N-terminal section; belongs to the bacterial solute-binding protein 3 family. The protein in the C-terminal section; belongs to the transglycosylase Slt family.

It is found in the cell outer membrane. It catalyses the reaction Exolytic cleavage of the (1-&gt;4)-beta-glycosidic linkage between N-acetylmuramic acid (MurNAc) and N-acetylglucosamine (GlcNAc) residues in peptidoglycan, from either the reducing or the non-reducing ends of the peptidoglycan chains, with concomitant formation of a 1,6-anhydrobond in the MurNAc residue.. Murein-degrading enzyme that degrades murein glycan strands and insoluble, high-molecular weight murein sacculi, with the concomitant formation of a 1,6-anhydromuramoyl product. Lytic transglycosylases (LTs) play an integral role in the metabolism of the peptidoglycan (PG) sacculus. Their lytic action creates space within the PG sacculus to allow for its expansion as well as for the insertion of various structures such as secretion systems and flagella. This is Membrane-bound lytic murein transglycosylase F from Actinobacillus succinogenes (strain ATCC 55618 / DSM 22257 / CCUG 43843 / 130Z).